The chain runs to 89 residues: UPF0147 protein Saci_0891 (89 aa).

It belongs to the UPF0147 family.

The protein is UPF0147 protein Saci_0891 of Sulfolobus acidocaldarius (strain ATCC 33909 / DSM 639 / JCM 8929 / NBRC 15157 / NCIMB 11770).